Reading from the N-terminus, the 312-residue chain is Fibrinogen-like protein 1 (312 aa).

A signal peptide spans 1-22; the sequence is MAKMFSFILVTTALVMGRGSSA. Residues 39–60 adopt a coiled-coil conformation; sequence LLETRVKQQQVKISQLLHEKQV. Positions 74–306 constitute a Fibrinogen C-terminal domain; sequence LGGKRQYADC…SVVMKIRPND (233 aa). Cystine bridges form between C83-C112 and C248-C261.

As to quaternary structure, homodimer. Interacts (via the Fibrinogen C-terminal domain) with LAG3 (via Ig-like domains 1 and 2).

It is found in the secreted. Immune suppressive molecule that inhibits antigen-specific T-cell activation by acting as a major ligand of LAG3. Responsible for LAG3 T-cell inhibitory function. Binds LAG3 independently from MHC class II (MHC-II). Secreted by, and promotes growth of, hepatocytes. This is Fibrinogen-like protein 1 (FGL1) from Bos taurus (Bovine).